The sequence spans 294 residues: 33 kDa chaperonin (294 aa).

2 disulfides stabilise this stretch: cysteine 236–cysteine 238 and cysteine 269–cysteine 272.

The protein belongs to the HSP33 family. Under oxidizing conditions two disulfide bonds are formed involving the reactive cysteines. Under reducing conditions zinc is bound to the reactive cysteines and the protein is inactive.

The protein resides in the cytoplasm. In terms of biological role, redox regulated molecular chaperone. Protects both thermally unfolding and oxidatively damaged proteins from irreversible aggregation. Plays an important role in the bacterial defense system toward oxidative stress. In Desulforamulus reducens (strain ATCC BAA-1160 / DSM 100696 / MI-1) (Desulfotomaculum reducens), this protein is 33 kDa chaperonin.